A 664-amino-acid chain; its full sequence is Alpha-1,4-glucan:maltose-1-phosphate maltosyltransferase (664 aa).

Positions 261, 321, and 356 each coordinate alpha-maltose 1-phosphate. The active-site Nucleophile is Asp393. Asn394 provides a ligand contact to alpha-maltose 1-phosphate. Glu422 acts as the Proton donor in catalysis. Position 533–534 (533–534) interacts with alpha-maltose 1-phosphate; that stretch reads KY.

The protein belongs to the glycosyl hydrolase 13 family. GlgE subfamily. Homodimer.

The catalysed reaction is alpha-maltose 1-phosphate + [(1-&gt;4)-alpha-D-glucosyl](n) = [(1-&gt;4)-alpha-D-glucosyl](n+2) + phosphate. In terms of biological role, maltosyltransferase that uses maltose 1-phosphate (M1P) as the sugar donor to elongate linear or branched alpha-(1-&gt;4)-glucans. Is involved in a branched alpha-glucan biosynthetic pathway from trehalose, together with TreS, Mak and GlgB. The sequence is that of Alpha-1,4-glucan:maltose-1-phosphate maltosyltransferase from Pseudomonas aeruginosa (strain ATCC 15692 / DSM 22644 / CIP 104116 / JCM 14847 / LMG 12228 / 1C / PRS 101 / PAO1).